The chain runs to 65 residues: Large ribosomal subunit protein uL29 (65 aa).

This sequence belongs to the universal ribosomal protein uL29 family.

In Leptothrix cholodnii (strain ATCC 51168 / LMG 8142 / SP-6) (Leptothrix discophora (strain SP-6)), this protein is Large ribosomal subunit protein uL29.